The chain runs to 405 residues: Ubiquitin-like modifier-activating enzyme 5 (405 aa).

Residues 1-44 (MATVEELQTRVKQLEEELERERTRNRGGTDGGGGRKKIDQMSSE) are disordered. Positions 7–24 (LQTRVKQLEEELERERTR) are enriched in basic and acidic residues. ATP-binding residues include Gly-81, Asp-102, Lys-125, Asn-148, and Asn-182. Zn(2+) contacts are provided by Cys-224 and Cys-227. Catalysis depends on Cys-248, which acts as the Glycyl thioester intermediate. Residues Cys-301 and Cys-306 each coordinate Zn(2+). The interval 346–377 (AETTEEELKAASHGHVPELVEGVHVAYVRPMT) is linker. The UFC1-binding sequence (UFC) signature appears at 390 to 405 (DDQESLEDLMAKMKSI).

Belongs to the ubiquitin-activating E1 family. UBA5 subfamily. As to quaternary structure, homodimer; homodimerization is required for UFM1 activation. Interacts (via UIS motif) with UFM1; binds UFM1 via a trans-binding mechanism in which UFM1 interacts with distinct sites in both subunits of the UBA5 homodimer. Interacts (via C-terminus) with UFC1.

It is found in the cytoplasm. Its subcellular location is the nucleus. It localises to the endoplasmic reticulum membrane. The protein resides in the golgi apparatus. In terms of biological role, E1-like enzyme which specifically catalyzes the first step in ufmylation. Activates UFM1 by first adenylating its C-terminal glycine residue with ATP, and thereafter linking this residue to the side chain of a cysteine residue in E1, yielding a UFM1-E1 thioester and free AMP. Activates UFM1 via a trans-binding mechanism, in which UFM1 interacts with distinct sites in both subunits of the UBA5 homodimer. Trans-binding also promotes stabilization of the UBA5 homodimer, and enhances ATP-binding. Transfer of UFM1 from UBA5 to the E2-like enzyme UFC1 also takes place using a trans mechanism. The sequence is that of Ubiquitin-like modifier-activating enzyme 5 from Branchiostoma floridae (Florida lancelet).